A 210-amino-acid polypeptide reads, in one-letter code: Regulatory protein RecX (210 aa).

The tract at residues 28–47 (SRRQEEGAASSLFDREAEEK) is disordered.

Belongs to the RecX family.

The protein resides in the cytoplasm. Its function is as follows. Modulates RecA activity. The sequence is that of Regulatory protein RecX from Corynebacterium efficiens (strain DSM 44549 / YS-314 / AJ 12310 / JCM 11189 / NBRC 100395).